A 252-amino-acid polypeptide reads, in one-letter code: MFGFFKKDKAVEVEVPTQVPAHIGIIMDGNGRWAKKRMQPRVFGHKAGMEALQTVTKAANKLGVKVITVYAFSTENWTRPDQEVKFIMNLPVEFYDNYVPELHANNVKIQMIGETDRLPKQTFEALTKAEELTKNNTGLILNFALNYGGRAEITQALKLISQDVLDAKINPGDITEELIGNYLFTQHLPKDLRDPDLIIRTSGELRLSNFLPWQGAYSELYFTDTLWPDFDEAALQEAILAYNRRHRRFGGV.

Residue Asp-28 is part of the active site. Asp-28 lines the Mg(2+) pocket. Residues 29–32 (GNGR), Trp-33, Arg-41, His-45, and 73–75 (STE) each bind substrate. The active-site Proton acceptor is the Asn-76. Residues Trp-77, Arg-79, Arg-200, and 206–208 (RLS) each bind substrate. Glu-219 is a Mg(2+) binding site.

This sequence belongs to the UPP synthase family. Homodimer. The cofactor is Mg(2+).

Catalyzes the condensation of isopentenyl diphosphate (IPP) with allylic pyrophosphates generating different type of terpenoids. The protein is Isoprenyl transferase of Streptococcus pneumoniae serotype 4 (strain ATCC BAA-334 / TIGR4).